We begin with the raw amino-acid sequence, 1151 residues long: UDP-N-acetylglucosamine--peptide N-acetylglucosaminyltransferase (1151 aa).

12 TPR repeats span residues 125–158 (LKKV…DPNN), 193–226 (AEAY…KPEF), 227–260 (IDAY…NPDL), 261–294 (YCVR…QPQF), 295–328 (AVAW…DPNF), 329–362 (LDAY…SGNH), 363–396 (AVVH…QPHF), 397–430 (PDAY…CPTH), 431–464 (ADSQ…YPEF), 465–498 (AAAH…APTF), 499–532 (ADAY…NPAF), and 533–566 (ADAH…KPDF). The stretch at 567–577 (PDAYCNLAHCH) is one TPR 13; truncated repeat. The Nuclear localization signal signature appears at 591–607 (RKLVQIVEDQLCKKRLP). Histidine 612 (proton acceptor) is an active-site residue. UDP-binding positions include glutamine 954, lysine 957, 1010-1013 (VAAK), 1016-1019 (HVRR), 1034-1036 (GHT), and aspartate 1040.

This sequence belongs to the glycosyltransferase 41 family. O-GlcNAc transferase subfamily.

The protein localises to the nucleus. It localises to the cytoplasm. The protein resides in the perinuclear region. The catalysed reaction is L-seryl-[protein] + UDP-N-acetyl-alpha-D-glucosamine = 3-O-(N-acetyl-beta-D-glucosaminyl)-L-seryl-[protein] + UDP + H(+). It carries out the reaction L-threonyl-[protein] + UDP-N-acetyl-alpha-D-glucosamine = 3-O-(N-acetyl-beta-D-glucosaminyl)-L-threonyl-[protein] + UDP + H(+). Its pathway is protein modification; protein glycosylation. Addition of nucleotide-activated sugars directly onto the polypeptide through O-glycosidic linkage with the hydroxyl of serine or threonine. Influences tap habituation in the mechanosensory neurons cell autonomously. This Caenorhabditis elegans protein is UDP-N-acetylglucosamine--peptide N-acetylglucosaminyltransferase (ogt-1).